Here is a 319-residue protein sequence, read N- to C-terminus: Heavy metal-associated isoprenylated plant protein 9 (319 aa).

Composition is skewed to basic and acidic residues over residues 1-11 (MGEEVKPEAKE) and 24-45 (EEKKKDVAEEKKVAAEEEKPKE). The segment at 1–57 (MGEEVKPEAKEAASAPQAVPAEEEEKKKDVAEEKKVAAEEEKPKEEEEPQPPPPPPP) is disordered. Residues 21–48 (AEEEEKKKDVAEEKKVAAEEEKPKEEEE) are a coiled coil. 2 HMA domains span residues 55-118 (PPPF…KRMA) and 144-208 (LTTV…KQAR). 4 residues coordinate a metal cation: C66, C69, C155, and C158. The tract at residues 207–282 (ARIVPQPDPE…RDNEMTAMAQ (76 aa)) is disordered. Residues 224–254 (QEEKKEESGEGNEKPPETGEEKEEEKKKEGE) show a composition bias toward basic and acidic residues. Positions 255 to 268 (ENGEEGGGEEAAAT) are enriched in acidic residues. At C316 the chain carries Cysteine methyl ester. Residue C316 is the site of S-farnesyl cysteine attachment. Positions 317–319 (CIS) are cleaved as a propeptide — removed in mature form.

Belongs to the HIPP family.

In terms of biological role, heavy-metal-binding protein. The chain is Heavy metal-associated isoprenylated plant protein 9 from Arabidopsis thaliana (Mouse-ear cress).